Here is a 239-residue protein sequence, read N- to C-terminus: MQYFDLMKKACDSVGMEFNEDKYQKFMLYKDLLKEWNEKINLTAITEDEEIVKKHFIDCIKAFKADEFKKAKTVIDVGTGAGFPGLPIAIMREDVEVTLLDSLNKRINFLNEVVNKLGLKNVKTIHSRAEDGARKKELRENFDIATSRAVANMCVLSEFCIPYVKVNGNFIALKGPNITEELNDSKNAIGTLGGKLKGITEVEIEGTDLNHNLVIVDKIKSTPKTFPRKAGNVTKKPLK.

S-adenosyl-L-methionine is bound by residues Gly78, Phe83, Ala129 to Glu130, and Arg148.

Belongs to the methyltransferase superfamily. RNA methyltransferase RsmG family.

The protein resides in the cytoplasm. In terms of biological role, specifically methylates the N7 position of a guanine in 16S rRNA. This Clostridium perfringens (strain 13 / Type A) protein is Ribosomal RNA small subunit methyltransferase G.